The chain runs to 336 residues: E3 ubiquitin-protein ligase RING2 (336 aa).

Ser-2 is modified (N-acetylserine). Residues 2 to 179 form an interaction with HIP2 region; the sequence is SQAVQTNGTQ…AEDNGDSSHC (178 aa). At Ser-41 the chain carries Phosphoserine. The segment at 51–91 adopts an RING-type zinc-finger fold; it reads CPICLDMLKNTMTTKECLHRFCADCIITALRSGNKECPTCR. Positions 93-98 are interaction with nucleosomes via an acidic patch on histone H2A and histone H2B; it reads KLVSKR. A Glycyl lysine isopeptide (Lys-Gly) (interchain with G-Cter in ubiquitin) cross-link involves residue Lys-112. Residues Ser-143 and Ser-168 each carry the phosphoserine modification. The tract at residues 157 to 213 is disordered; it reads QRGKKQQIENGSGAEDNGDSSHCSNASTHSNQEAGPSNKRTKTSDDSGLEPDNNNAA. Polar residues predominate over residues 176-191; it reads SSHCSNASTHSNQEAG. Residues Lys-249 and Lys-323 each participate in a glycyl lysine isopeptide (Lys-Gly) (interchain with G-Cter in SUMO2) cross-link.

In terms of assembly, component of chromatin-associated Polycomb (PcG) complexes. Component of a number of PRC1-like complexes; these complexes contain either the polycomb group ring finger protein PCGF1, or PCGF2, or PCGF3, or BMI1, or PCGF5, or PCGF6. Distinct PRC1-like complexes are composed of a RING1 subunit (RING1B or RING1A), one of the six PCGF proteins (PCGF1, PCGF2, PCGF3, BMI1, PCGF5 or PCGF6), one PHC protein (PHC1, PHC2 or PHC3) and one of the CBX proteins (CBX2, CBX4, CBX6, CBX7 or CBX8). Part of a complex that contains RNF2, UB2D3 and BMI1; within that complex RNF2 and BMI1 form a tight heterodimer, where UB2D3 interacts only with RNF2. The complex composed of RNF2, UB2D3 and BMI1 binds nucleosomes, and has activity only with nucleosomal histone H2A. Part of a complex that contains PCGF5, RNF2 and UBE2D3. Part of a complex that contains AUTS2, PCGF5, RNF2, CSNK2B and RYBP. Interacts with CBX6 and CBX8. Interacts with PHC1, PCGF2, RYBP, CBX7, CBX4, CBX2, RNF1/RING1, BMI1 and PHC2. Interaction with RYBP and CBX7 is mutually exclusive; both compete for the same binding site on RNF2. Component of repressive BCOR complex containing a Polycomb group subcomplex at least composed of RYBP, PCGF1, BCOR and RING1. Interacts with CBX2 and PHC1. Interacts with CHTOP. Interacts with AURKB. Part of the E2F6.com-1 complex in G0 phase composed of E2F6, MGA, MAX, TFDP1, CBX3, BAT8, EUHMTASE1, RNF1/RING1, RNF2/RING2, MBLR, L3MBTL2 and YAF2. Component of some MLL1/MLL complex, at least composed of the core components KMT2A/MLL1, ASH2L, HCFC1/HCF1, WDR5 and RBBP5, as well as the facultative components BACC1, CHD8, E2F6, HSP70, INO80C, KANSL1, LAS1L, MAX, MCRS1, MGA, MYST1/MOF, PELP1, PHF20, PRP31, RING2, RUVB1/TIP49A, RUVB2/TIP49B, SENP3, TAF1, TAF4, TAF6, TAF7, TAF9 and TEX10. Interacts with RYBP, HIP2 and TFCP2. Interacts with NUPR1. Interacts with SAMD7 in a PHC2-dependent manner. Post-translationally, monoubiquitinated, by auto-ubiquitination. Polyubiquitinated in the presence of UBE2D3 (in vitro).

The protein localises to the nucleus. Its subcellular location is the cytoplasm. It is found in the chromosome. It carries out the reaction S-ubiquitinyl-[E2 ubiquitin-conjugating enzyme]-L-cysteine + [acceptor protein]-L-lysine = [E2 ubiquitin-conjugating enzyme]-L-cysteine + N(6)-ubiquitinyl-[acceptor protein]-L-lysine.. Its pathway is protein modification; protein ubiquitination. Its function is as follows. E3 ubiquitin-protein ligase that mediates monoubiquitination of 'Lys-119' of histone H2A (H2AK119Ub), thereby playing a central role in histone code and gene regulation. H2AK119Ub gives a specific tag for epigenetic transcriptional repression and participates in X chromosome inactivation of female mammals. May be involved in the initiation of both imprinted and random X inactivation. Essential component of a Polycomb group (PcG) multiprotein PRC1-like complex, a complex class required to maintain the transcriptionally repressive state of many genes, including Hox genes, throughout development. PcG PRC1 complex acts via chromatin remodeling and modification of histones, rendering chromatin heritably changed in its expressibility. E3 ubiquitin-protein ligase activity is enhanced by BMI1/PCGF4. Acts as the main E3 ubiquitin ligase on histone H2A of the PRC1 complex, while RING1 may rather act as a modulator of RNF2/RING2 activity. Plays a role in the transcriptional repression of genes that are required for pluripotency in embryonic stem cells, thereby contributing to differentiation of the ectodermal and endodermal germ layers. Association with the chromosomal DNA is cell-cycle dependent. In resting B- and T-lymphocytes, interaction with AURKB leads to block its activity, thereby maintaining transcription in resting lymphocytes. Also acts as a negative regulator of autophagy by mediating ubiquitination of AMBRA1, leading to its subsequent degradation. In Pongo abelii (Sumatran orangutan), this protein is E3 ubiquitin-protein ligase RING2 (RNF2).